Consider the following 367-residue polypeptide: Heme A synthase (367 aa).

8 consecutive transmembrane segments (helical) span residues 25–45 (ALRLWLGFVLLALFCLVLVGG), 111–131 (LIARGIGVIFALPLLYFWLTG), 139–159 (WPLVGILALGALQGFIGWWMV), 174–194 (LATHLVMACLIFAGCMWIMRG), 210–230 (GLAAAIAVFALFQIYLGALVA), 272–292 (FIHRIGAYTLFALVLINMVIA), 305–325 (AVLLFALVTVQAAIGVATLLM), and 327–347 (VPLHWGLLHQAGALVVFGFAV). Histidine 274 contributes to the heme binding site. Histidine 335 lines the heme pocket.

Belongs to the COX15/CtaA family. Type 2 subfamily. As to quaternary structure, interacts with CtaB. Heme b serves as cofactor.

The protein localises to the cell membrane. The enzyme catalyses Fe(II)-heme o + 2 A + H2O = Fe(II)-heme a + 2 AH2. It functions in the pathway porphyrin-containing compound metabolism; heme A biosynthesis; heme A from heme O: step 1/1. Its function is as follows. Catalyzes the conversion of heme O to heme A by two successive hydroxylations of the methyl group at C8. The first hydroxylation forms heme I, the second hydroxylation results in an unstable dihydroxymethyl group, which spontaneously dehydrates, resulting in the formyl group of heme A. This Rhizobium etli (strain ATCC 51251 / DSM 11541 / JCM 21823 / NBRC 15573 / CFN 42) protein is Heme A synthase.